A 275-amino-acid polypeptide reads, in one-letter code: Light-independent protochlorophyllide reductase iron-sulfur ATP-binding protein (275 aa).

ATP is bound by residues 12–17 (GIGKST) and lysine 41. Position 16 (serine 16) interacts with Mg(2+). [4Fe-4S] cluster contacts are provided by cysteine 97 and cysteine 131. 182-183 (NR) lines the ATP pocket.

It belongs to the NifH/BchL/ChlL family. Homodimer. Protochlorophyllide reductase is composed of three subunits; BchL, BchN and BchB. It depends on [4Fe-4S] cluster as a cofactor.

The catalysed reaction is chlorophyllide a + oxidized 2[4Fe-4S]-[ferredoxin] + 2 ADP + 2 phosphate = protochlorophyllide a + reduced 2[4Fe-4S]-[ferredoxin] + 2 ATP + 2 H2O. The protein operates within porphyrin-containing compound metabolism; bacteriochlorophyll biosynthesis (light-independent). Functionally, component of the dark-operative protochlorophyllide reductase (DPOR) that uses Mg-ATP and reduced ferredoxin to reduce ring D of protochlorophyllide (Pchlide) to form chlorophyllide a (Chlide). This reaction is light-independent. The L component serves as a unique electron donor to the NB-component of the complex, and binds Mg-ATP. The polypeptide is Light-independent protochlorophyllide reductase iron-sulfur ATP-binding protein (Pelodictyon phaeoclathratiforme (strain DSM 5477 / BU-1)).